The primary structure comprises 188 residues: Scytalone dehydratase (188 aa).

Residues Y27, Y47, and F50 each contribute to the substrate site. Active-site residues include H82 and H107. A substrate-binding site is contributed by N128.

Belongs to the scytalone dehydratase family. In terms of assembly, homotrimer. Each subunit contains an active site, located in the central part of the hydrophobic core of the monomer, which functions independently.

It localises to the endosome. It catalyses the reaction scytalone = 1,3,8-trihydroxynaphthalene + H2O. Its pathway is pigment biosynthesis; melanin biosynthesis. With respect to regulation, carpropamid acts as an efficient inhibitor of scytalone dehydratase activity. Functionally, scytalone dehydratase; part of the gene cluster that mediates the biosynthesis of dihydroxynaphthalene (DHN)-melanin, a bluish-green pigment and a structural component of the conidial wall. Within the pathway, catalyzes the dehydration of scytalone as well as of vermelone. The polypeptide is Scytalone dehydratase (Colletotrichum orbiculare (strain 104-T / ATCC 96160 / CBS 514.97 / LARS 414 / MAFF 240422) (Cucumber anthracnose fungus)).